Reading from the N-terminus, the 1201-residue chain is DNA-directed RNA polymerase subunit beta' (1201 aa).

Zn(2+) contacts are provided by C60, C62, C75, and C78. Mg(2+) contacts are provided by D449, D451, and D453. Zn(2+)-binding residues include C818, C892, C899, and C902.

This sequence belongs to the RNA polymerase beta' chain family. In terms of assembly, the RNAP catalytic core consists of 2 alpha, 1 beta, 1 beta' and 1 omega subunit. When a sigma factor is associated with the core the holoenzyme is formed, which can initiate transcription. Mg(2+) is required as a cofactor. Requires Zn(2+) as cofactor.

The enzyme catalyses RNA(n) + a ribonucleoside 5'-triphosphate = RNA(n+1) + diphosphate. Functionally, DNA-dependent RNA polymerase catalyzes the transcription of DNA into RNA using the four ribonucleoside triphosphates as substrates. This chain is DNA-directed RNA polymerase subunit beta', found in Listeria welshimeri serovar 6b (strain ATCC 35897 / DSM 20650 / CCUG 15529 / CIP 8149 / NCTC 11857 / SLCC 5334 / V8).